Reading from the N-terminus, the 97-residue chain is Integration host factor subunit alpha (97 aa).

This sequence belongs to the bacterial histone-like protein family. In terms of assembly, heterodimer of an alpha and a beta chain.

In terms of biological role, this protein is one of the two subunits of integration host factor, a specific DNA-binding protein that functions in genetic recombination as well as in transcriptional and translational control. The chain is Integration host factor subunit alpha from Histophilus somni (strain 2336) (Haemophilus somnus).